We begin with the raw amino-acid sequence, 542 residues long: Probable myosin-binding protein 6 (542 aa).

Residues 1 to 21 (MYIQLLCFFLFLFLLLQATMS) form the signal peptide. Residues 39–59 (FLIYTVLEWSLIVFLFIDGVI) form a helical membrane-spanning segment. Residues 219–239 (SFLAPAPSPRVSHNKLSENES) form a disordered region. The region spanning 300–398 (SILNQLKKEV…ELEAEFEVYR (99 aa)) is the GTD-binding domain. The disordered stretch occupies residues 419-480 (GNASAYDDCQ…DEEKGSESKE (62 aa)). Over residues 437–456 (AVSSSNQQENGENIDQNGQS) the composition is skewed to polar residues. Residues 471-480 (DEEKGSESKE) are compositionally biased toward basic and acidic residues.

Its subcellular location is the membrane. Functionally, probable membrane-anchored myosin receptors. This Arabidopsis thaliana (Mouse-ear cress) protein is Probable myosin-binding protein 6.